We begin with the raw amino-acid sequence, 745 residues long: Cysteine protease atg4 (745 aa).

Composition is skewed to low complexity over residues 29-42 (QQSY…APQQ), 52-64 (SPTS…SSST), and 194-215 (NNNS…NNNN). Disordered regions lie at residues 29-68 (QQSY…AMGN) and 192-215 (FQNN…NNNN). Cys-262 acts as the Nucleophile in catalysis. Disordered regions lie at residues 344–363 (LNRG…KEEE) and 439–480 (QNNN…NGYN). Residues 439–477 (QNNNKNNNNNNPTTTTTTTTTATSSNNNNNQSPPSRVPN) are compositionally biased toward low complexity. Catalysis depends on residues Asp-562 and His-564. A disordered region spans residues 686–745 (HIPYNPNNNQNNNQNNNNNNNKNNNNNTNQQQTPNYPPKLNTYQPDFSSDGEIDDFTMVG). Residues 688–719 (PYNPNNNQNNNQNNNNNNNKNNNNNTNQQQTP) are compositionally biased toward low complexity. The segment covering 734–745 (SDGEIDDFTMVG) has biased composition (acidic residues).

It belongs to the peptidase C54 family.

It localises to the cytoplasm. The enzyme catalyses [protein]-C-terminal L-amino acid-glycyl-phosphatidylethanolamide + H2O = [protein]-C-terminal L-amino acid-glycine + a 1,2-diacyl-sn-glycero-3-phosphoethanolamine. Functionally, cysteine protease that plays a key role in autophagy by mediating both proteolytic activation and delipidation of ATG8 family proteins. The protease activity is required for proteolytic activation of ATG8 family proteins: cleaves the C-terminal amino acid of ATG8 proteins to reveal a C-terminal glycine. Exposure of the glycine at the C-terminus is essential for ATG8 proteins conjugation to phosphatidylethanolamine (PE) and insertion to membranes, which is necessary for autophagy. In addition to the protease activity, also mediates delipidation of PE-conjugated ATG8 proteins. This Dictyostelium discoideum (Social amoeba) protein is Cysteine protease atg4 (atg4-1).